The sequence spans 132 residues: Small ribosomal subunit protein uS8 (132 aa).

Belongs to the universal ribosomal protein uS8 family. As to quaternary structure, part of the 30S ribosomal subunit. Contacts proteins S5 and S12.

In terms of biological role, one of the primary rRNA binding proteins, it binds directly to 16S rRNA central domain where it helps coordinate assembly of the platform of the 30S subunit. In Xylella fastidiosa (strain M23), this protein is Small ribosomal subunit protein uS8.